We begin with the raw amino-acid sequence, 465 residues long: Serine/threonine-protein kinase 38 (465 aa).

The residue at position 2 (Ala2) is an N-acetylalanine. Residues 62–87 form an interaction with S100B region; the sequence is KRLRRSAHARKETEFLRLKRTRLGLE. Position 74 is a phosphothreonine (Thr74). Positions 89–382 constitute a Protein kinase domain; sequence FESLKVIGRG…VEEIKSNSFF (294 aa). ATP contacts are provided by residues 95–103 and Lys118; that span reads IGRGAFGEV. Asp212 functions as the Proton acceptor in the catalytic mechanism. Residue Ser264 is modified to Phosphoserine. A Phosphoserine; by autocatalysis modification is found at Ser281. Positions 306-311 match the UFM1-interacting motif (UFIM) motif; sequence WSLGVI. In terms of domain architecture, AGC-kinase C-terminal spans 383–455; the sequence is EGVDWEHIRE…KRFEGLTARG (73 aa). Thr444 carries the post-translational modification Phosphothreonine; by STK24/MST3.

It belongs to the protein kinase superfamily. AGC Ser/Thr protein kinase family. As to quaternary structure, homodimeric S100B binds two molecules of STK38. Interacts with MOB1 and MOB2. Interacts with MAP3K1 and MAP3K2 (via the kinase catalytic domain). Forms a tripartite complex with MOBKL1B and STK3/MST2. Interacts with MICAL1; leading to inhibit the protein kinase activity by antagonizing activation by MST1/STK4. The cofactor is Mg(2+). ISGylated. Post-translationally, phosphorylated by STK3/MST2 and this is enhanced by MOBKL1B. In terms of tissue distribution, ubiquitously expressed with highest levels observed in peripheral blood leukocytes.

It localises to the nucleus. The protein resides in the cytoplasm. Its subcellular location is the chromosome. It carries out the reaction L-seryl-[protein] + ATP = O-phospho-L-seryl-[protein] + ADP + H(+). The enzyme catalyses L-threonyl-[protein] + ATP = O-phospho-L-threonyl-[protein] + ADP + H(+). Its activity is regulated as follows. Activated by binding of S100B which releases autoinhibitory N-lobe interactions, enabling ATP to bind and the autophosphorylation of Ser-281. Thr-444 then undergoes calcium-dependent phosphorylation by STK24/MST3. Interactions between phosphorylated Thr-444 and the N-lobe promote additional structural changes that complete the activation of the kinase. Autoinhibition is also released by the binding of MOB1/MOBKL1A and MOB2/HCCA2 to the N-terminal of STK38. Serine/threonine-protein kinase that acts as a negative regulator of MAP3K1/2 signaling. Converts MAP3K2 from its phosphorylated form to its non-phosphorylated form and inhibits autophosphorylation of MAP3K2. Acts as an ufmylation 'reader' in a kinase-independent manner: specifically recognizes and binds mono-ufmylated histone H4 in response to DNA damage, promoting the recruitment of SUV39H1 to the double-strand breaks, resulting in ATM activation. The chain is Serine/threonine-protein kinase 38 from Homo sapiens (Human).